A 180-amino-acid polypeptide reads, in one-letter code: Large ribosomal subunit protein uL6 (180 aa).

It belongs to the universal ribosomal protein uL6 family. Part of the 50S ribosomal subunit.

This protein binds to the 23S rRNA, and is important in its secondary structure. It is located near the subunit interface in the base of the L7/L12 stalk, and near the tRNA binding site of the peptidyltransferase center. In Clostridioides difficile (strain 630) (Peptoclostridium difficile), this protein is Large ribosomal subunit protein uL6.